The following is a 152-amino-acid chain: Nucleoside diphosphate kinase A (152 aa).

ATP is bound by residues Lys-12, Phe-60, Arg-88, and Thr-94. Residue Lys-100 forms a Glycyl lysine isopeptide (Lys-Gly) (interchain with G-Cter in ubiquitin) linkage. Arg-105 and Asn-115 together coordinate ATP. His-118 acts as the Pros-phosphohistidine intermediate in catalysis. Phosphoserine is present on residues Ser-120, Ser-122, and Ser-125.

It belongs to the NDK family. Hexamer of two different chains: An and B (A6, A5B, A4B2, A3B3, A2B4, AB5, B6). Interacts with PRUNE1. Component of the SET complex, composed of at least ANP32A, APEX1, HMGB2, NME1, SET and TREX1. Within this complex, interacts directly with SET. Also interacts with TREX1, but only following translocation to the nucleus. The cofactor is Mg(2+).

It is found in the cytoplasm. It localises to the nucleus. It catalyses the reaction a 2'-deoxyribonucleoside 5'-diphosphate + ATP = a 2'-deoxyribonucleoside 5'-triphosphate + ADP. The enzyme catalyses a ribonucleoside 5'-diphosphate + ATP = a ribonucleoside 5'-triphosphate + ADP. Autophosphorylation at His-118 increases serine/threonine protein kinase activity of the enzyme. Interaction with the SET complex inhibits exonuclease activity. Functionally, major role in the synthesis of nucleoside triphosphates other than ATP. The ATP gamma phosphate is transferred to the NDP beta phosphate via a ping-pong mechanism, using a phosphorylated active-site intermediate. Possesses nucleoside-diphosphate kinase, serine/threonine-specific protein kinase, geranyl and farnesyl pyrophosphate kinase, histidine protein kinase and 3'-5' exonuclease activities. Involved in cell proliferation, differentiation and development, signal transduction, G protein-coupled receptor endocytosis, and gene expression. Required for neural development including neural patterning and cell fate determination. During GZMA-mediated cell death, works in concert with TREX1. NME1 nicks one strand of DNA and TREX1 removes bases from the free 3' end to enhance DNA damage and prevent DNA end reannealing and rapid repair. The sequence is that of Nucleoside diphosphate kinase A (Nme1) from Rattus norvegicus (Rat).